The chain runs to 520 residues: GMP synthase [glutamine-hydrolyzing] (520 aa).

A Glutamine amidotransferase type-1 domain is found at 12-205 (KIIVLDYGSQ…AISICGARGD (194 aa)). Residue C89 is the Nucleophile of the active site. Active-site residues include H179 and E181. The GMPS ATP-PPase domain occupies 206–395 (WSMDNFIDME…LGMPEEIVWR (190 aa)). 233–239 (SGGVDSS) serves as a coordination point for ATP.

In terms of assembly, homodimer.

It carries out the reaction XMP + L-glutamine + ATP + H2O = GMP + L-glutamate + AMP + diphosphate + 2 H(+). Its pathway is purine metabolism; GMP biosynthesis; GMP from XMP (L-Gln route): step 1/1. In terms of biological role, catalyzes the synthesis of GMP from XMP. This Streptococcus pyogenes serotype M1 protein is GMP synthase [glutamine-hydrolyzing].